A 201-amino-acid polypeptide reads, in one-letter code: Ras-related protein Rab-9B (201 aa).

Val-18, Gly-19, Lys-20, Ser-21, Ser-22, Asp-33, Ser-34, Ala-36, His-38, and Thr-39 together coordinate GTP. Position 21 (Ser-21) interacts with Mg(2+). A Switch 1 motif is present at residues 31–42 (KFDSQAFHTIGV). Ser-34 bears the Phosphoserine mark. 2 residues coordinate Mg(2+): Thr-39 and Asp-62. The Switch 2 signature appears at 64–78 (AGQERFKSLRTPFYR). Residues Gly-65, Asn-124, Lys-125, Ala-155, and Lys-156 each coordinate GTP. 2 S-geranylgeranyl cysteine lipidation sites follow: Cys-200 and Cys-201.

It belongs to the small GTPase superfamily. Rab family. In terms of assembly, interacts (GTP-bound form) with SGSM1; the GDP-bound form has much lower affinity for SGSM1. The GTP-bound form but not the GDP-bound form interacts with HPS4 and the BLOC-3 complex (heterodimer of HPS1 and HPS4) but does not interact with HPS1 alone. Interacts (GTP-bound form) with NDE1. It depends on Mg(2+) as a cofactor.

It is found in the cell membrane. Its subcellular location is the cytoplasmic vesicle. It localises to the phagosome membrane. It carries out the reaction GTP + H2O = GDP + phosphate + H(+). Regulated by guanine nucleotide exchange factors (GEFs) which promote the exchange of bound GDP for free GTP. Regulated by GTPase activating proteins (GAPs) which increase the GTP hydrolysis activity. Inhibited by GDP dissociation inhibitors (GDIs). In terms of biological role, the small GTPases Rab are key regulators of intracellular membrane trafficking, from the formation of transport vesicles to their fusion with membranes. Rabs cycle between an inactive GDP-bound form and an active GTP-bound form that is able to recruit to membranes different sets of downstream effectors directly responsible for vesicle formation, movement, tethering and fusion. RAB9B is involved in the transport of proteins between the endosomes and the trans Golgi network. May use NDE1/NDEL1 as an effector to interact with the dynein motor complex in order to control retrograde trafficking of RAB9-associated late endosomes to the TGN. The polypeptide is Ras-related protein Rab-9B (Mus musculus (Mouse)).